Consider the following 82-residue polypeptide: Large ribosomal subunit protein bL31B (82 aa).

Belongs to the bacterial ribosomal protein bL31 family. Type B subfamily. Part of the 50S ribosomal subunit.

The chain is Large ribosomal subunit protein bL31B from Pectobacterium carotovorum subsp. carotovorum (strain PC1).